Reading from the N-terminus, the 202-residue chain is Outer-membrane lipoprotein carrier protein (202 aa).

The signal sequence occupies residues 1-18; the sequence is MNKLFLILLLIFSHEVFS.

It belongs to the LolA family. As to quaternary structure, monomer.

It localises to the periplasm. In terms of biological role, participates in the translocation of lipoproteins from the inner membrane to the outer membrane. Only forms a complex with a lipoprotein if the residue after the N-terminal Cys is not an aspartate (The Asp acts as a targeting signal to indicate that the lipoprotein should stay in the inner membrane). The chain is Outer-membrane lipoprotein carrier protein from Legionella pneumophila (strain Paris).